The following is a 486-amino-acid chain: UDP-N-acetylmuramoyl-L-alanyl-D-glutamate--2,6-diaminopimelate ligase (486 aa).

Serine 34 contacts UDP-N-acetyl-alpha-D-muramoyl-L-alanyl-D-glutamate. 112 to 118 (GTAGKTS) serves as a coordination point for ATP. Residues 154 to 155 (TT), serine 181, glutamine 187, and arginine 189 contribute to the UDP-N-acetyl-alpha-D-muramoyl-L-alanyl-D-glutamate site. Lysine 221 is subject to N6-carboxylysine. Meso-2,6-diaminopimelate-binding positions include arginine 385, 409-412 (DNPR), glycine 457, and glutamate 461. A Meso-diaminopimelate recognition motif motif is present at residues 409–412 (DNPR).

The protein belongs to the MurCDEF family. MurE subfamily. The cofactor is Mg(2+). Carboxylation is probably crucial for Mg(2+) binding and, consequently, for the gamma-phosphate positioning of ATP.

It localises to the cytoplasm. The enzyme catalyses UDP-N-acetyl-alpha-D-muramoyl-L-alanyl-D-glutamate + meso-2,6-diaminopimelate + ATP = UDP-N-acetyl-alpha-D-muramoyl-L-alanyl-gamma-D-glutamyl-meso-2,6-diaminopimelate + ADP + phosphate + H(+). It participates in cell wall biogenesis; peptidoglycan biosynthesis. Its function is as follows. Catalyzes the addition of meso-diaminopimelic acid to the nucleotide precursor UDP-N-acetylmuramoyl-L-alanyl-D-glutamate (UMAG) in the biosynthesis of bacterial cell-wall peptidoglycan. The chain is UDP-N-acetylmuramoyl-L-alanyl-D-glutamate--2,6-diaminopimelate ligase from Rhizobium meliloti (strain 1021) (Ensifer meliloti).